The primary structure comprises 391 residues: UPF0229 protein CLH_2838 (391 aa).

Disordered stretches follow at residues 1–23 (MAIF…DKRR) and 75–107 (VATG…GNEE). Positions 80-92 (GEEKRGDKIESGS) are enriched in basic and acidic residues.

This sequence belongs to the UPF0229 family.

The polypeptide is UPF0229 protein CLH_2838 (Clostridium botulinum (strain Alaska E43 / Type E3)).